Reading from the N-terminus, the 358-residue chain is NADH-quinone oxidoreductase subunit H (358 aa).

8 helical membrane-spanning segments follow: residues 20–40, 95–115, 128–148, 168–188, 206–226, 253–273, 295–315, and 334–354; these read ITVG…IPLI, ALFY…WAVI, IGLL…IIAG, ISYE…SGSM, VFSW…ISAV, GFAF…IAAL, TPSA…YLWI, and VLIP…ISPL.

It belongs to the complex I subunit 1 family. In terms of assembly, NDH-1 is composed of 14 different subunits. Subunits NuoA, H, J, K, L, M, N constitute the membrane sector of the complex.

Its subcellular location is the cell inner membrane. The enzyme catalyses a quinone + NADH + 5 H(+)(in) = a quinol + NAD(+) + 4 H(+)(out). Functionally, NDH-1 shuttles electrons from NADH, via FMN and iron-sulfur (Fe-S) centers, to quinones in the respiratory chain. The immediate electron acceptor for the enzyme in this species is believed to be ubiquinone. Couples the redox reaction to proton translocation (for every two electrons transferred, four hydrogen ions are translocated across the cytoplasmic membrane), and thus conserves the redox energy in a proton gradient. This subunit may bind ubiquinone. The polypeptide is NADH-quinone oxidoreductase subunit H (Neisseria gonorrhoeae (strain ATCC 700825 / FA 1090)).